The chain runs to 326 residues: Vitamin B12 import system permease protein BtuC (326 aa).

9 consecutive transmembrane segments (helical) span residues 15–35, 61–81, 88–108, 112–132, 146–166, 184–204, 240–260, 274–294, and 302–322; these read WLLC…CAGE, LAVL…QALF, PGLL…VLLG, LPNW…TLIL, LLAG…AIYF, GGVD…LLWI, GWMV…GLVI, VLLP…DVVA, and ELPI…WLLL.

This sequence belongs to the binding-protein-dependent transport system permease family. FecCD subfamily. As to quaternary structure, the complex is composed of two ATP-binding proteins (BtuD), two transmembrane proteins (BtuC) and a solute-binding protein (BtuF).

It is found in the cell inner membrane. In terms of biological role, part of the ABC transporter complex BtuCDF involved in vitamin B12 import. Involved in the translocation of the substrate across the membrane. This Escherichia coli (strain SE11) protein is Vitamin B12 import system permease protein BtuC.